A 207-amino-acid polypeptide reads, in one-letter code: Imidazole glycerol phosphate synthase subunit HisH (207 aa).

A Glutamine amidotransferase type-1 domain is found at 1-207 (MIAIVDYNMG…ENFTKYRNLK (207 aa)). Catalysis depends on C79, which acts as the Nucleophile. Active-site residues include H185 and E187.

In terms of assembly, heterodimer of HisH and HisF.

It is found in the cytoplasm. It carries out the reaction 5-[(5-phospho-1-deoxy-D-ribulos-1-ylimino)methylamino]-1-(5-phospho-beta-D-ribosyl)imidazole-4-carboxamide + L-glutamine = D-erythro-1-(imidazol-4-yl)glycerol 3-phosphate + 5-amino-1-(5-phospho-beta-D-ribosyl)imidazole-4-carboxamide + L-glutamate + H(+). The enzyme catalyses L-glutamine + H2O = L-glutamate + NH4(+). Its pathway is amino-acid biosynthesis; L-histidine biosynthesis; L-histidine from 5-phospho-alpha-D-ribose 1-diphosphate: step 5/9. In terms of biological role, IGPS catalyzes the conversion of PRFAR and glutamine to IGP, AICAR and glutamate. The HisH subunit catalyzes the hydrolysis of glutamine to glutamate and ammonia as part of the synthesis of IGP and AICAR. The resulting ammonia molecule is channeled to the active site of HisF. The protein is Imidazole glycerol phosphate synthase subunit HisH of Sulfurimonas denitrificans (strain ATCC 33889 / DSM 1251) (Thiomicrospira denitrificans (strain ATCC 33889 / DSM 1251)).